Reading from the N-terminus, the 240-residue chain is Zein-alpha A20 (240 aa).

The N-terminal stretch at 1–21 (MATKIFSLLMLLALSACVANA) is a signal peptide.

Belongs to the zein family.

In terms of biological role, zeins are major seed storage proteins. This chain is Zein-alpha A20, found in Zea mays (Maize).